Reading from the N-terminus, the 359-residue chain is 5-amino-6-(D-ribitylamino)uracil--L-tyrosine 4-hydroxyphenyl transferase (359 aa).

One can recognise a Radical SAM core domain in the interval 45–282 (VTYVLNANIN…VYAISRIFFK (238 aa)). The [4Fe-4S] cluster site is built by C59, C63, and C66.

It belongs to the radical SAM superfamily. CofH family. Consists of two subunits, CofG and CofH. [4Fe-4S] cluster serves as cofactor.

It catalyses the reaction 5-amino-6-(D-ribitylamino)uracil + L-tyrosine + S-adenosyl-L-methionine = 5-amino-5-(4-hydroxybenzyl)-6-(D-ribitylimino)-5,6-dihydrouracil + 2-iminoacetate + 5'-deoxyadenosine + L-methionine + H(+). The protein operates within cofactor biosynthesis; coenzyme F0 biosynthesis. In terms of biological role, catalyzes the radical-mediated synthesis of 5-amino-5-(4-hydroxybenzyl)-6-(D-ribitylimino)-5,6-dihydrouracil from 5-amino-6-(D-ribitylamino)uracil and L-tyrosine. The protein is 5-amino-6-(D-ribitylamino)uracil--L-tyrosine 4-hydroxyphenyl transferase of Methanococcus vannielii (strain ATCC 35089 / DSM 1224 / JCM 13029 / OCM 148 / SB).